Here is a 141-residue protein sequence, read N- to C-terminus: MAKELTLSIIKPDAVAKSVIGEIYTRFEKAGLDIVAAKMIQLSREQAESFYDIHRARPFFKDLVDFMISGPVMIQVLKGDNAVAKNREIMGATNPKEAAPGTIRADFADSIDANAVHGSDSLENAAREIAFFFEPHELCNR.

6 residues coordinate ATP: Lys11, Phe59, Arg87, Thr93, Arg104, and Asn114. Residue His117 is the Pros-phosphohistidine intermediate of the active site.

This sequence belongs to the NDK family. Homotetramer. Requires Mg(2+) as cofactor.

The protein localises to the cytoplasm. It catalyses the reaction a 2'-deoxyribonucleoside 5'-diphosphate + ATP = a 2'-deoxyribonucleoside 5'-triphosphate + ADP. It carries out the reaction a ribonucleoside 5'-diphosphate + ATP = a ribonucleoside 5'-triphosphate + ADP. Its function is as follows. Major role in the synthesis of nucleoside triphosphates other than ATP. The ATP gamma phosphate is transferred to the NDP beta phosphate via a ping-pong mechanism, using a phosphorylated active-site intermediate. The protein is Nucleoside diphosphate kinase of Legionella pneumophila (strain Paris).